A 417-amino-acid chain; its full sequence is Carboxypeptidase A2 (417 aa).

An N-terminal signal peptide occupies residues 1-16; the sequence is MRLTPLLVALFGYIYC. The propeptide at 17 to 112 is activation peptide; sequence QETFVGDQVL…EMLFNQQRER (96 aa). Residues 120–412 form the Peptidase M14 domain; sequence AYHTLEEIYQ…LGLKTIMEHV (293 aa). Zn(2+) contacts are provided by histidine 177 and glutamate 180. Substrate is bound by residues 177 to 180, arginine 235, and 252 to 253; these read HARE and NR. Residues cysteine 246 and cysteine 269 are joined by a disulfide bond. Position 304 (histidine 304) interacts with Zn(2+). 305–306 is a binding site for substrate; that stretch reads SY. A disulfide bridge links cysteine 318 with cysteine 352. Residue tyrosine 356 coordinates substrate. Glutamate 378 functions as the Proton donor/acceptor in the catalytic mechanism.

Belongs to the peptidase M14 family. It depends on Zn(2+) as a cofactor.

It localises to the secreted. It catalyses the reaction Similar to that of carboxypeptidase A (EC 3.4.17.1), but with a preference for bulkier C-terminal residues.. In terms of biological role, carboxypeptidase that catalyzes the release of a C-terminal amino acid, with a preference for large aromatic C-terminal residues. This is Carboxypeptidase A2 (Cpa2) from Mus musculus (Mouse).